A 90-amino-acid polypeptide reads, in one-letter code: Cell division topological specificity factor (90 aa).

It belongs to the MinE family.

Functionally, prevents the cell division inhibition by proteins MinC and MinD at internal division sites while permitting inhibition at polar sites. This ensures cell division at the proper site by restricting the formation of a division septum at the midpoint of the long axis of the cell. The sequence is that of Cell division topological specificity factor from Lachnoclostridium phytofermentans (strain ATCC 700394 / DSM 18823 / ISDg) (Clostridium phytofermentans).